The following is a 377-amino-acid chain: Gap junction gamma-1 protein (377 aa).

Over 1–18 (MSWSFLTRLLEEINNHST) the chain is Cytoplasmic. Residues 19 to 39 (FVGKIWLTVLIIFRIVLTAVG) traverse the membrane as a helical segment. The Extracellular segment spans residues 40 to 75 (GESIYYDEQSKFTCNTHQPGCENVCYDAFAPLSHVR). The chain crosses the membrane as a helical span at residues 76-96 (FWVFQIILITTPSIMYLGFAM). At 97–174 (HRIARQPDEQ…RRIKQDGLMK (78 aa)) the chain is on the cytoplasmic side. The tract at residues 129–163 (DYEEAEDNQEEDPMICEEEEPEKDSEKGDKKKHDG) is disordered. Over residues 131 to 151 (EEAEDNQEEDPMICEEEEPEK) the composition is skewed to acidic residues. Residues 175 to 197 (VYVLQLLFRSVFEVGFLMGQYVL) traverse the membrane as a helical segment. The Extracellular portion of the chain corresponds to 198 to 228 (YGFEVIPFFVCSRNPCPHTVDCFVSRPTEKT). A helical membrane pass occupies residues 229 to 249 (IFLLIMYAVSALCLFLNLCEL). Topologically, residues 250-377 (FHLGIGGIRD…GVGSREKSGL (128 aa)) are cytoplasmic. 2 disordered regions span residues 266–286 (KEIQESRKKKPSAPPNYHSVL) and 341–377 (AHASRSSSPEANSIAAEQNRLNLAQEKGVGSREKSGL). Residues 344–362 (SRSSSPEANSIAAEQNRLN) are compositionally biased toward polar residues.

It belongs to the connexin family. Gamma-type subfamily. As to quaternary structure, a connexon is composed of a hexamer of connexins.

Its subcellular location is the cell membrane. It localises to the cell junction. The protein resides in the gap junction. Functionally, one gap junction consists of a cluster of closely packed pairs of transmembrane channels, the connexons, through which materials of low MW diffuse from one cell to a neighboring cell. The protein is Gap junction gamma-1 protein (gjc1) of Xenopus laevis (African clawed frog).